A 157-amino-acid chain; its full sequence is NudC domain-containing protein 2 (157 aa).

Ser-2 is modified (N-acetylserine). One can recognise a CS domain in the interval 14-104 (CGTPWGQWYQ…DAANCWTSLL (91 aa)). A disordered region spans residues 134-157 (FDFSGAEISGNYTKGGPDFSNLEK). Ser-142 is subject to Phosphoserine. The residue at position 145 (Tyr-145) is a Phosphotyrosine.

As to quaternary structure, interacts with LIS1.

It localises to the chromosome. The protein resides in the centromere. It is found in the kinetochore. The protein localises to the cytoplasm. Its subcellular location is the cytoskeleton. It localises to the microtubule organizing center. The protein resides in the centrosome. It is found in the spindle pole. Its function is as follows. May regulate the LIS1/dynein pathway by stabilizing LIS1 with Hsp90 chaperone. The polypeptide is NudC domain-containing protein 2 (NUDCD2) (Homo sapiens (Human)).